The sequence spans 135 residues: ATP synthase epsilon chain (135 aa).

The tract at residues 91-122 (EAQKQLSEAEQAWSKFDGQPNSPDKIKAQQAF) is disordered.

Belongs to the ATPase epsilon chain family. As to quaternary structure, F-type ATPases have 2 components, CF(1) - the catalytic core - and CF(0) - the membrane proton channel. CF(1) has five subunits: alpha(3), beta(3), gamma(1), delta(1), epsilon(1). CF(0) has three main subunits: a, b and c.

The protein localises to the cellular thylakoid membrane. Produces ATP from ADP in the presence of a proton gradient across the membrane. In Synechococcus sp. (strain RCC307), this protein is ATP synthase epsilon chain.